Consider the following 233-residue polypeptide: MSTDLQHIRIGLTNNHPCSYLPEREERVAVALDENLHTEDNYQVLMANGFRRSGDTIYKPHCQHCNACQPIRIAVPDFIPSKSQKRLQSKGKALHWEMKPELDPNWFDLYSRYIYERHKDGTMFPPREDEFARFTQTTWLTTGFLHIYDESDRLLAVAVTDIMDKCASAFYTFFDPDYPLSLGTLGVLFQLEYCQRENKHWLYLGYQIDECPAMNYKTRFQRHQRLVNQRWQG.

The protein belongs to the R-transferase family. Bpt subfamily.

Its subcellular location is the cytoplasm. It catalyses the reaction N-terminal L-glutamyl-[protein] + L-leucyl-tRNA(Leu) = N-terminal L-leucyl-L-glutamyl-[protein] + tRNA(Leu) + H(+). The catalysed reaction is N-terminal L-aspartyl-[protein] + L-leucyl-tRNA(Leu) = N-terminal L-leucyl-L-aspartyl-[protein] + tRNA(Leu) + H(+). In terms of biological role, functions in the N-end rule pathway of protein degradation where it conjugates Leu from its aminoacyl-tRNA to the N-termini of proteins containing an N-terminal aspartate or glutamate. The chain is Aspartate/glutamate leucyltransferase from Vibrio campbellii (strain ATCC BAA-1116).